We begin with the raw amino-acid sequence, 793 residues long: Endonuclease MutS2 (793 aa).

Residue 329 to 336 (GPNTGGKT) coordinates ATP. The segment at 611–639 (LARARQAVEPTEEEQRARRRGEVPRGLKP) is disordered. The segment covering 623 to 639 (EEQRARRRGEVPRGLKP) has biased composition (basic and acidic residues). Positions 717–792 (VDLRGLMVEE…GDGVTVAKLR (76 aa)) constitute a Smr domain.

This sequence belongs to the DNA mismatch repair MutS family. MutS2 subfamily. As to quaternary structure, homodimer. Binds to stalled ribosomes, contacting rRNA.

Its function is as follows. Endonuclease that is involved in the suppression of homologous recombination and thus may have a key role in the control of bacterial genetic diversity. Functionally, acts as a ribosome collision sensor, splitting the ribosome into its 2 subunits. Detects stalled/collided 70S ribosomes which it binds and splits by an ATP-hydrolysis driven conformational change. Acts upstream of the ribosome quality control system (RQC), a ribosome-associated complex that mediates the extraction of incompletely synthesized nascent chains from stalled ribosomes and their subsequent degradation. Probably generates substrates for RQC. The polypeptide is Endonuclease MutS2 (Symbiobacterium thermophilum (strain DSM 24528 / JCM 14929 / IAM 14863 / T)).